A 429-amino-acid chain; its full sequence is Dihydroorotase (429 aa).

Residues His-61 and His-63 each coordinate Zn(2+). Residues 63–65 (HYR) and Asn-95 contribute to the substrate site. Residues Asp-153, His-180, and His-233 each contribute to the Zn(2+) site. Asn-279 serves as a coordination point for substrate. Asp-306 serves as a coordination point for Zn(2+). Residue Asp-306 is part of the active site. Substrate-binding positions include His-310 and 324 to 325 (FG).

This sequence belongs to the metallo-dependent hydrolases superfamily. DHOase family. Class I DHOase subfamily. Zn(2+) is required as a cofactor.

The catalysed reaction is (S)-dihydroorotate + H2O = N-carbamoyl-L-aspartate + H(+). The protein operates within pyrimidine metabolism; UMP biosynthesis via de novo pathway; (S)-dihydroorotate from bicarbonate: step 3/3. In terms of biological role, catalyzes the reversible cyclization of carbamoyl aspartate to dihydroorotate. The polypeptide is Dihydroorotase (Ligilactobacillus salivarius (strain UCC118) (Lactobacillus salivarius)).